A 436-amino-acid chain; its full sequence is Cyclin-dependent kinase 11B (436 aa).

The Nuclear localization signal motif lies at 25–30 (VKKNRK). A calmodulin-binding region spans residues 30 to 44 (KKLVKGLHRAGPPPE). One can recognise a Protein kinase domain in the interval 79–364 (FQCLNRIEEG…AEDGLKHEYF (286 aa)). ATP contacts are provided by residues 85 to 93 (IEEGTYGVV) and Lys108. Ser123 is subject to Phosphoserine; by CDK7. Thr129 is subject to Phosphothreonine; by CDK7. Residue Asp203 is the Proton acceptor of the active site. The residue at position 230 (Ser230) is a Phosphoserine. Residue Tyr235 is modified to Phosphotyrosine. The residue at position 236 (Thr236) is a Phosphothreonine. Residue Lys282 forms a Glycyl lysine isopeptide (Lys-Gly) (interchain with G-Cter in SUMO2) linkage. Positions 383–406 (SEQQCVKRGTSPKPPEGGLGYSQL) are disordered. Thr392 carries the post-translational modification Phosphothreonine. Ser393 is modified (phosphoserine).

It belongs to the protein kinase superfamily. CMGC Ser/Thr protein kinase family. CDC2/CDKX subfamily. May interact PAK1 and RANBP9. p110C interacts with RNPS1. Interacts with CCND3. Interacts with CCNL1 and CCNL2. Forms complexes with pre-mRNA-splicing factors, including at least SRSF1, SRSF2 AND SRSF7/SLU7. Mg(2+) is required as a cofactor.

It is found in the cytoplasm. The protein resides in the nucleus membrane. The protein localises to the endomembrane system. Its subcellular location is the perinuclear region. The catalysed reaction is L-seryl-[protein] + ATP = O-phospho-L-seryl-[protein] + ADP + H(+). It catalyses the reaction L-threonyl-[protein] + ATP = O-phospho-L-threonyl-[protein] + ADP + H(+). In terms of biological role, plays multiple roles in cell cycle progression, cytokinesis and apoptosis. Involved in pre-mRNA splicing in a kinase activity-dependent manner. May act as a negative regulator of normal cell cycle progression. The polypeptide is Cyclin-dependent kinase 11B (Cdk11b) (Rattus norvegicus (Rat)).